Here is a 372-residue protein sequence, read N- to C-terminus: Cyclin-dependent kinase 9 (372 aa).

Residues Y19–F315 enclose the Protein kinase domain. Residues I25–V33 and K48 contribute to the ATP site. The active-site Proton acceptor is D149. The interval P341–F372 is disordered. Polar residues predominate over residues Q352 to T366.

This sequence belongs to the protein kinase superfamily. CMGC Ser/Thr protein kinase family. CDC2/CDKX subfamily. Associates with cyclin-T to form P-TEFb. Also associates with cyclin-K.

Its subcellular location is the nucleus. It catalyses the reaction L-seryl-[protein] + ATP = O-phospho-L-seryl-[protein] + ADP + H(+). The enzyme catalyses L-threonyl-[protein] + ATP = O-phospho-L-threonyl-[protein] + ADP + H(+). It carries out the reaction [DNA-directed RNA polymerase] + ATP = phospho-[DNA-directed RNA polymerase] + ADP + H(+). In terms of biological role, member of the cyclin-dependent kinase pair (CDK9/cyclin-T) complex, also called positive transcription elongation factor b (P-TEFb), which facilitates the transition from abortive to production elongation by phosphorylating the CTD (C-terminal domain) of the large subunit of RNA polymerase II (RNAP II), SUPT5H and RDBP. The CDK9/cyclin-K complex also has a kinase activity toward CTD of RNAP II and can substitute for P-TEFb in vitro. The chain is Cyclin-dependent kinase 9 (CDK9) from Gallus gallus (Chicken).